The following is a 66-amino-acid chain: Clarkitoxin-1 (66 aa).

Disulfide bonds link cysteine 3-cysteine 24, cysteine 17-cysteine 42, cysteine 46-cysteine 59, and cysteine 60-cysteine 65.

As to expression, expressed by the venom gland.

The protein resides in the secreted. In terms of biological role, not toxic to mice when injected intravenously or intraperitoneally. This is Clarkitoxin-1 from Micrurus clarki (Clark's coral snake).